Here is a 311-residue protein sequence, read N- to C-terminus: Zeta-sarcoglycan (311 aa).

Residues 1 to 50 (MDRSTDLDIQELKMTREQYILATQQNNLPRPENAQLYPVGIYGWRKRCLY) are Cytoplasmic-facing. Residues 51-71 (FFVLLLLVTMIVNLAMTIWIL) form a helical; Signal-anchor for type II membrane protein membrane-spanning segment. The Extracellular segment spans residues 72–311 (KVMNFTVDGM…QSSSSICLWN (240 aa)). 2 N-linked (GlcNAc...) asparagine glycosylation sites follow: Asn75 and Asn123. Cys285 and Cys301 are disulfide-bonded.

This sequence belongs to the sarcoglycan beta/delta/gamma/zeta family. In terms of tissue distribution, expressed in the heart, skeletal muscle and arterial vascular smooth muscle.

It localises to the cell membrane. It is found in the sarcolemma. The protein localises to the cytoplasm. Its subcellular location is the cytoskeleton. Functionally, component of the sarcoglycan complex, a subcomplex of the dystrophin-glycoprotein complex which forms a link between the F-actin cytoskeleton and the extracellular matrix. May play a role in the maintenance of striated muscle membrane stability. The polypeptide is Zeta-sarcoglycan (Sgcz) (Mus musculus (Mouse)).